We begin with the raw amino-acid sequence, 218 residues long: MAEKVVVIYSGGMDSFTVLNRAKKDGKEVFALSFDYGQRHVKELECASIVCKELAVNHKVIDISAINQLLAGSSLTDDIDIPEGHYEAESMKSTVVPNRNMILLSLAVAYAVSVGAEQVYYGAHSGDHAIYPDCRPEFVEKMNDVCKIANYESVEIFSPYLSVDKTAILADGIKMGLDYSNTWTCYNGREKACGKCGSCQERLEAFEENNATDPIPYE.

An ATP-binding site is contributed by 9-19 (YSGGMDSFTVL). 4 residues coordinate Zn(2+): cysteine 185, cysteine 193, cysteine 196, and cysteine 199.

This sequence belongs to the QueC family. Zn(2+) serves as cofactor.

It carries out the reaction 7-carboxy-7-deazaguanine + NH4(+) + ATP = 7-cyano-7-deazaguanine + ADP + phosphate + H2O + H(+). Its pathway is purine metabolism; 7-cyano-7-deazaguanine biosynthesis. In terms of biological role, catalyzes the ATP-dependent conversion of 7-carboxy-7-deazaguanine (CDG) to 7-cyano-7-deazaguanine (preQ(0)). This Colwellia psychrerythraea (strain 34H / ATCC BAA-681) (Vibrio psychroerythus) protein is 7-cyano-7-deazaguanine synthase 1.